Reading from the N-terminus, the 138-residue chain is ATP synthase epsilon chain 1 (138 aa).

Belongs to the ATPase epsilon chain family. As to quaternary structure, F-type ATPases have 2 components, CF(1) - the catalytic core - and CF(0) - the membrane proton channel. CF(1) has five subunits: alpha(3), beta(3), gamma(1), delta(1), epsilon(1). CF(0) has three main subunits: a, b and c.

It localises to the cell inner membrane. In terms of biological role, produces ATP from ADP in the presence of a proton gradient across the membrane. In Syntrophotalea carbinolica (strain DSM 2380 / NBRC 103641 / GraBd1) (Pelobacter carbinolicus), this protein is ATP synthase epsilon chain 1.